Here is a 211-residue protein sequence, read N- to C-terminus: DNA-directed RNA polymerases I, II, and III subunit RPABC1 (211 aa).

It belongs to the archaeal Rpo5/eukaryotic RPB5 RNA polymerase subunit family. In terms of assembly, component of the RNA polymerase I (Pol I), RNA polymerase II (Pol II) and RNA polymerase III (Pol III) complexes consisting of at least 13, 12 and 17 subunits, respectively. In RNA Pol II, this subunit is present in 2-fold molar excess over the other subunits.

Its subcellular location is the nucleus. Functionally, DNA-dependent RNA polymerase catalyzes the transcription of DNA into RNA using the four ribonucleoside triphosphates as substrates. Common component of RNA polymerases I, II and III which synthesize ribosomal RNA precursors, mRNA precursors and many functional non-coding RNAs, and small RNAs, such as 5S rRNA and tRNAs, respectively. Pol II is the central component of the basal RNA polymerase II transcription machinery. Pols are composed of mobile elements that move relative to each other. In Pol II, RPB5 is part of the lower jaw surrounding the central large cleft and thought to grab the incoming DNA template. Seems to be the major component in this process. The sequence is that of DNA-directed RNA polymerases I, II, and III subunit RPABC1 (rpb-5) from Caenorhabditis elegans.